The chain runs to 620 residues: Kelch-like protein 32 (620 aa).

Residues 42-109 (CDITLIAEEQ…AYTGQILLEP (68 aa)) enclose the BTB domain. Kelch repeat units follow at residues 290 to 346 (TLYI…VMGD), 347 to 398 (FLFV…AMEE), 399 to 446 (YLYA…VADG), 447 to 494 (LLWI…AVQR), 496 to 547 (LYVL…VHNG), and 549 to 599 (IYLV…FLPA).

In Homo sapiens (Human), this protein is Kelch-like protein 32 (KLHL32).